We begin with the raw amino-acid sequence, 244 residues long: Extracellular superoxide dismutase [Cu-Zn] (244 aa).

The signal sequence occupies residues 1-15; it reads MVAFLFCNLLLVACG. 2 disulfides stabilise this stretch: cysteine 70–cysteine 215 and cysteine 132–cysteine 214. A glycan (N-linked (GlcNAc...) asparagine) is linked at asparagine 114. The Cu cation site is built by histidine 121, histidine 123, and histidine 138. Histidine 138, histidine 146, histidine 149, and aspartate 152 together coordinate Zn(2+). Histidine 188 serves as a coordination point for Cu cation. The tract at residues 224 to 244 is disordered; sequence AWESQTKERKKRRRESECKTT.

Belongs to the Cu-Zn superoxide dismutase family. In terms of assembly, homodimer. Interacts with ATP7A; this interaction is copper-dependent and is required for SOD3 activity. It depends on Cu cation as a cofactor. Requires Zn(2+) as cofactor.

The protein localises to the secreted. It localises to the extracellular space. Its subcellular location is the golgi apparatus. It is found in the trans-Golgi network. The enzyme catalyses 2 superoxide + 2 H(+) = H2O2 + O2. In terms of biological role, protect the extracellular space from toxic effect of reactive oxygen intermediates by converting superoxide radicals into hydrogen peroxide and oxygen. This is Extracellular superoxide dismutase [Cu-Zn] (Sod3) from Rattus norvegicus (Rat).